A 349-amino-acid polypeptide reads, in one-letter code: Inositol 2-dehydrogenase (349 aa).

It belongs to the Gfo/Idh/MocA family. Homotetramer.

It carries out the reaction myo-inositol + NAD(+) = scyllo-inosose + NADH + H(+). Functionally, involved in the oxidation of myo-inositol (MI) to 2-keto-myo-inositol (2KMI or 2-inosose). The sequence is that of Inositol 2-dehydrogenase from Mycolicibacterium gilvum (strain PYR-GCK) (Mycobacterium gilvum (strain PYR-GCK)).